The chain runs to 709 residues: Golgin-84 (709 aa).

The Cytoplasmic portion of the chain corresponds to 1–664; that stretch reads MASWLKVAED…RATRFLWRHP (664 aa). Disordered regions lie at residues 24–132, 144–195, and 211–265; these read TELS…VVDR, EVEV…NQDA, and EVIH…DQLE. A compositionally biased stretch (low complexity) spans 29 to 43; sequence EQSSPQPSGSSSQEG. Basic and acidic residues predominate over residues 78 to 89; sequence PPRERIKIEKIR. Residues 94 to 113 show a composition bias toward low complexity; it reads VDSSSVDASASKPDVSSSDV. Residues 114–132 show a composition bias toward basic and acidic residues; it reads KGLDDDGGAEKEEKVVVDR. Over residues 162-180 the composition is skewed to low complexity; the sequence is DGAADSGNSEGAAESSAPS. 2 stretches are compositionally biased toward basic and acidic residues: residues 211–222 and 248–265; these read EVIHEKNIKEVP and QQEH…DQLE. Positions 287–592 form a coiled coil; the sequence is RVCAGLSSRL…AALEFQLEKS (306 aa). Residues 665 to 684 traverse the membrane as a helical; Signal-anchor for type II membrane protein segment; sequence VARVSLLFYLVFVHLFLMYL. The Lumenal portion of the chain corresponds to 685–707; it reads MHRLQDFASREGPTAMGGLANSD.

It is found in the golgi apparatus membrane. Functionally, may be involved in maintaining Golgi structure and in intra-Golgi transport. The chain is Golgin-84 from Oryza sativa subsp. japonica (Rice).